Here is a 180-residue protein sequence, read N- to C-terminus: Thiol:disulfide interchange protein TxlA homolog (180 aa).

Residues 10-26 traverse the membrane as a helical segment; that stretch reads LLAVVAIALSAAVYLGF. In terms of domain architecture, Thioredoxin spans 34–143; sequence SLEAQAQRAI…LEQNITALVA (110 aa). Residues Cys-64 and Cys-67 are joined by a disulfide bond.

This sequence belongs to the thioredoxin family.

It localises to the cell membrane. Functionally, required for disulfide bond formation in some proteins. Acts by transferring its disulfide bond to other proteins and is reduced in the process. The chain is Thiol:disulfide interchange protein TxlA homolog (txlA) from Synechocystis sp. (strain ATCC 27184 / PCC 6803 / Kazusa).